Consider the following 326-residue polypeptide: Cobalamin biosynthesis protein CobD (326 aa).

4 consecutive transmembrane segments (helical) span residues Met58–Leu78, Leu81–Leu101, Phe157–Leu177, and Val304–Leu324.

This sequence belongs to the CobD/CbiB family.

It is found in the cell membrane. Its pathway is cofactor biosynthesis; adenosylcobalamin biosynthesis. Its function is as follows. Converts cobyric acid to cobinamide by the addition of aminopropanol on the F carboxylic group. The polypeptide is Cobalamin biosynthesis protein CobD (Sinorhizobium fredii (strain NBRC 101917 / NGR234)).